Consider the following 713-residue polypeptide: Major surface-labeled trophozoite antigen 417 (713 aa).

The N-terminal stretch at 1–17 (MFGRFLLAIVILQLART) is a signal peptide. The Extracellular segment spans residues 18–679 (ACTQEADDGK…KDSGSTNKSG (662 aa)). N-linked (GlcNAc...) asparagine glycosylation is found at asparagine 289 and asparagine 676. The chain crosses the membrane as a helical span at residues 680–708 (LSTGAIAGISVAVIVVVGGLIGFLCWWFL). Topologically, residues 709–713 (CRGKA) are cytoplasmic.

It belongs to the Giardia variant surface protein family.

It is found in the cell membrane. This is Major surface-labeled trophozoite antigen 417 (TSA 417) from Giardia intestinalis (Giardia lamblia).